We begin with the raw amino-acid sequence, 149 residues long: Small ribosomal subunit protein uS13 (149 aa).

This sequence belongs to the universal ribosomal protein uS13 family. Part of the 30S ribosomal subunit. Forms a loose heterodimer with protein S19. Forms two bridges to the 50S subunit in the 70S ribosome.

In terms of biological role, located at the top of the head of the 30S subunit, it contacts several helices of the 16S rRNA. In the 70S ribosome it contacts the 23S rRNA (bridge B1a) and protein L5 of the 50S subunit (bridge B1b), connecting the 2 subunits; these bridges are implicated in subunit movement. This is Small ribosomal subunit protein uS13 from Thermococcus kodakarensis (strain ATCC BAA-918 / JCM 12380 / KOD1) (Pyrococcus kodakaraensis (strain KOD1)).